A 360-amino-acid polypeptide reads, in one-letter code: Peptide chain release factor 1 (360 aa).

N5-methylglutamine is present on glutamine 237.

This sequence belongs to the prokaryotic/mitochondrial release factor family. In terms of processing, methylated by PrmC. Methylation increases the termination efficiency of RF1.

The protein resides in the cytoplasm. Peptide chain release factor 1 directs the termination of translation in response to the peptide chain termination codons UAG and UAA. The protein is Peptide chain release factor 1 of Pseudomonas putida (strain W619).